Here is a 500-residue protein sequence, read N- to C-terminus: Serine/threonine-protein phosphatase 2A 56 kDa regulatory subunit beta isoform (500 aa).

Residues 1 to 19 (METKLPPASTPTSPSSPGL) are compositionally biased toward low complexity. Disordered regions lie at residues 1–55 (METK…YQSN) and 474–500 (GTQG…GGQS). A phosphoserine; by CLK2 mark is found at serine 32, serine 35, serine 44, serine 46, serine 47, and serine 48. Basic residues predominate over residues 34–45 (RSLRRARPRRSH).

The protein belongs to the phosphatase 2A regulatory subunit B56 family. As to quaternary structure, component of the serine/threonine-protein phosphatase 2A complex (PP2A). This complex consists of a common heterodimeric core enzyme, composed of a 36 kDa catalytic subunit (subunit C) and a 65 kDa constant scaffold subunit (PR65 or subunit A), that associates with a variety of regulatory subunits. Proteins that associate with the core dimer include three families of regulatory subunits B (the R2/B/PR55/B55, R3/B''/PR72/PR130/PR59 and R5/B'/B56 families), the 48 kDa variable regulatory subunit, viral proteins, and cell signaling molecules. Interacts with SGO1. Interacts with AKT1. In terms of tissue distribution, highly expressed in brain.

It is found in the nucleus. Functionally, as the regulatory component of the serine/threonine-protein phosphatase 2A (PP2A) holoenzyme, modulates substrate specificity, subcellular localization, and responsiveness to phosphorylation. The phosphorylated form mediates the interaction between PP2A and AKT1, leading to AKT1 dephosphorylation. This chain is Serine/threonine-protein phosphatase 2A 56 kDa regulatory subunit beta isoform (PPP2R5B), found in Oryctolagus cuniculus (Rabbit).